Here is a 481-residue protein sequence, read N- to C-terminus: Aspartyl/glutamyl-tRNA(Asn/Gln) amidotransferase subunit B (481 aa).

Belongs to the GatB/GatE family. GatB subfamily. In terms of assembly, heterotrimer of A, B and C subunits.

It carries out the reaction L-glutamyl-tRNA(Gln) + L-glutamine + ATP + H2O = L-glutaminyl-tRNA(Gln) + L-glutamate + ADP + phosphate + H(+). The enzyme catalyses L-aspartyl-tRNA(Asn) + L-glutamine + ATP + H2O = L-asparaginyl-tRNA(Asn) + L-glutamate + ADP + phosphate + 2 H(+). In terms of biological role, allows the formation of correctly charged Asn-tRNA(Asn) or Gln-tRNA(Gln) through the transamidation of misacylated Asp-tRNA(Asn) or Glu-tRNA(Gln) in organisms which lack either or both of asparaginyl-tRNA or glutaminyl-tRNA synthetases. The reaction takes place in the presence of glutamine and ATP through an activated phospho-Asp-tRNA(Asn) or phospho-Glu-tRNA(Gln). This chain is Aspartyl/glutamyl-tRNA(Asn/Gln) amidotransferase subunit B, found in Pseudomonas savastanoi pv. phaseolicola (strain 1448A / Race 6) (Pseudomonas syringae pv. phaseolicola (strain 1448A / Race 6)).